The sequence spans 82 residues: Consomatin Mao1 (82 aa).

Residues 1–22 form the signal peptide; the sequence is MQTASWVMVMMMVWITAPLSEG. Residues 23 to 57 constitute a propeptide that is removed on maturation; it reads GKLNDVIRGLVPDDVTPQLILRSLFFHRPSDSVVR. C65 and C70 are oxidised to a cystine. W67 bears the D-tryptophan mark. 4-hydroxyproline occurs at positions 71, 72, and 74. A propeptide spanning residues 75–82 is cleaved from the precursor; it reads WRRPNGKG.

Belongs to the conotoxin C superfamily. Consomatin family. Expressed by the venom duct.

The protein resides in the secreted. In terms of biological role, moderately activates human somatostatin receptors (SSTR) with a preferential activation of SSTR1 and SSTR4. In vivo, does not cause behavioral changes in mice within a few minutes of intracranial injection, but causes a progressive loss of movement thereafter. Four to five hours after injection, mice recover, even with the highest dose tested. Shows antinociception and antihyperalgesia activities in two mouse models of acute pain, most probably by acting outside the central nervous system. The protein is Consomatin Mao1 of Conus maioensis (Sea snail).